Reading from the N-terminus, the 676-residue chain is Pre-mRNA-splicing factor clf1 (676 aa).

14 HAT repeats span residues 52-84 (EYQG…WELE), 86-118 (KEFR…SEMR), 120-152 (RNIN…MEET), 154-185 (GNIQ…LEKR), 187-218 (NEFE…FEEE), 220-255 (GTSD…FEAK), 257-291 (KEYE…FEKQ), 301-333 (VILS…LEET), 335-369 (GDPD…LWIF), 379-415 (KDVD…FDIR), 417-448 (MDLQ…LERQ), 450-482 (FEFV…LERG), 484-518 (DDSE…FEEY), and 520-551 (GEYD…FEIN). Over residues 554–566 (EEEEEEEEEEEEE) the composition is skewed to acidic residues. The interval 554 to 573 (EEEEEEEEEEEEERPVSDEA) is disordered. An HAT 15 repeat occupies 572–610 (EAKRRARAVFERAHKVFKEKEMKEERVELLNAWRAFEHT).

The protein belongs to the crooked-neck family. In terms of assembly, associated with the spliceosome.

The protein localises to the nucleus. Involved in pre-mRNA splicing and cell cycle progression. Required for the spliceosome assembly and initiation of the DNA replication. In Aspergillus fumigatus (strain ATCC MYA-4609 / CBS 101355 / FGSC A1100 / Af293) (Neosartorya fumigata), this protein is Pre-mRNA-splicing factor clf1 (clf1).